The following is a 125-amino-acid chain: uncharacterized protein (125 aa).

A compositionally biased stretch (polar residues) spans 1-33 (MLPHQNSSYTRQGTNDAQANDMRSPSQLPTSVN). Disordered stretches follow at residues 1–35 (MLPH…VNIE) and 44–63 (SEKL…KKHT). Residues 53 to 63 (NRSRSGIKKHT) are compositionally biased toward basic residues.

This is an uncharacterized protein from Schizosaccharomyces pombe (strain 972 / ATCC 24843) (Fission yeast).